The chain runs to 300 residues: MGAQLRIYRRRIRSVRATAKITRAMELIAASRIVKAQQRVVASTPYAEAITRAVSAVASQSNVDHPLLTERARPVRAAVLLVTSDRGLAGAYSANVLREGEALTEHLRERGLDVVHYIIGRKGLAYYRFRDRPVVRSWLGFSENPSYLQAKDVADALIAAFNTPADDGGVDEIHVVYTKFVSMLTQTPEARRILPLEVEETTEEPVGGMFPQYEFEPNAAGVLDALLPRYVEARIYNALLQGAASELAARRRACKAATDNAEELIRTYTRLANAARQAEITQEISEIVGGADALVATGSE.

This sequence belongs to the ATPase gamma chain family. F-type ATPases have 2 components, CF(1) - the catalytic core - and CF(0) - the membrane proton channel. CF(1) has five subunits: alpha(3), beta(3), gamma(1), delta(1), epsilon(1). CF(0) has three main subunits: a, b and c.

The protein resides in the cell membrane. Produces ATP from ADP in the presence of a proton gradient across the membrane. The gamma chain is believed to be important in regulating ATPase activity and the flow of protons through the CF(0) complex. The sequence is that of ATP synthase gamma chain from Acidothermus cellulolyticus (strain ATCC 43068 / DSM 8971 / 11B).